Consider the following 873-residue polypeptide: Leucine--tRNA ligase (873 aa).

The 'HIGH' region motif lies at 41-51 (PYPSGRIHMGH). The 'KMSKS' region signature appears at 645–649 (KMSKS). Position 648 (Lys-648) interacts with ATP.

It belongs to the class-I aminoacyl-tRNA synthetase family.

The protein resides in the cytoplasm. It carries out the reaction tRNA(Leu) + L-leucine + ATP = L-leucyl-tRNA(Leu) + AMP + diphosphate. This chain is Leucine--tRNA ligase, found in Cereibacter sphaeroides (strain ATCC 17025 / ATH 2.4.3) (Rhodobacter sphaeroides).